A 42-amino-acid chain; its full sequence is Packaging protein P20 (42 aa).

A helical membrane pass occupies residues 11–31; it reads INWLIVILMLTIAGMAATLVC.

In terms of assembly, heterodimer of P20 and P22; further multimerizes as hexamers of heterodimers. Part of the dodecameric portal complex that is composed of the packaging efficiency factor P6, the DNA packaging ATPase P9, and the internal heterododecamer P20/P22 which spans the virion inner membrane.

The protein resides in the virion membrane. Together with P22, forms the internal part of the portal complex embeded in the virion internal membrane and which plays critical roles in genome packaging and genome ejection. Both proteins multimerize as a single ring-shaped heterdodecamer arranged around a central channel and interact with the P6/P9 external part of the portal. The chain is Packaging protein P20 (XX) from Acinetobacter calcoaceticus (Arthrobacter siderocapsulatus).